The primary structure comprises 247 residues: Dynein axonemal assembly factor 19 (247 aa).

Residues 12–32 (LEKELHSALQADRKYQRENDA) are a coiled coil.

Belongs to the DNAAF19/PR46b family. As to quaternary structure, homodimer. Expressed in all cells bearing motile cilia.

Its subcellular location is the cytoplasm. It localises to the cell projection. The protein localises to the cilium. It is found in the flagellum. Dynein-attachment factor required for cilia motility. In Danio rerio (Zebrafish), this protein is Dynein axonemal assembly factor 19 (dnaaf19).